Here is a 130-residue protein sequence, read N- to C-terminus: Transcription antitermination protein NusB (130 aa).

This sequence belongs to the NusB family.

Its function is as follows. Involved in transcription antitermination. Required for transcription of ribosomal RNA (rRNA) genes. Binds specifically to the boxA antiterminator sequence of the ribosomal RNA (rrn) operons. This Bacillus cereus (strain ATCC 10987 / NRS 248) protein is Transcription antitermination protein NusB.